Here is a 487-residue protein sequence, read N- to C-terminus: Glutamyl-tRNA(Gln) amidotransferase subunit A (487 aa).

Catalysis depends on charge relay system residues K75 and S150. S174 (acyl-ester intermediate) is an active-site residue.

The protein belongs to the amidase family. GatA subfamily. Heterotrimer of A, B and C subunits.

The catalysed reaction is L-glutamyl-tRNA(Gln) + L-glutamine + ATP + H2O = L-glutaminyl-tRNA(Gln) + L-glutamate + ADP + phosphate + H(+). Its function is as follows. Allows the formation of correctly charged Gln-tRNA(Gln) through the transamidation of misacylated Glu-tRNA(Gln) in organisms which lack glutaminyl-tRNA synthetase. The reaction takes place in the presence of glutamine and ATP through an activated gamma-phospho-Glu-tRNA(Gln). The protein is Glutamyl-tRNA(Gln) amidotransferase subunit A of Syntrophomonas wolfei subsp. wolfei (strain DSM 2245B / Goettingen).